Here is a 179-residue protein sequence, read N- to C-terminus: Large ribosomal subunit protein uL6 (179 aa).

This sequence belongs to the universal ribosomal protein uL6 family. In terms of assembly, part of the 50S ribosomal subunit.

This protein binds to the 23S rRNA, and is important in its secondary structure. It is located near the subunit interface in the base of the L7/L12 stalk, and near the tRNA binding site of the peptidyltransferase center. The polypeptide is Large ribosomal subunit protein uL6 (Synechocystis sp. (strain ATCC 27184 / PCC 6803 / Kazusa)).